Reading from the N-terminus, the 196-residue chain is Peptidyl-tRNA hydrolase (196 aa).

Tyrosine 14 serves as a coordination point for tRNA. The active-site Proton acceptor is the histidine 19. TRNA-binding residues include tyrosine 64, asparagine 66, and asparagine 112.

Belongs to the PTH family. Monomer.

Its subcellular location is the cytoplasm. The enzyme catalyses an N-acyl-L-alpha-aminoacyl-tRNA + H2O = an N-acyl-L-amino acid + a tRNA + H(+). Functionally, hydrolyzes ribosome-free peptidyl-tRNAs (with 1 or more amino acids incorporated), which drop off the ribosome during protein synthesis, or as a result of ribosome stalling. In terms of biological role, catalyzes the release of premature peptidyl moieties from peptidyl-tRNA molecules trapped in stalled 50S ribosomal subunits, and thus maintains levels of free tRNAs and 50S ribosomes. The protein is Peptidyl-tRNA hydrolase of Methylocella silvestris (strain DSM 15510 / CIP 108128 / LMG 27833 / NCIMB 13906 / BL2).